Reading from the N-terminus, the 262-residue chain is Electron transfer flavoprotein beta subunit lysine methyltransferase (262 aa).

The N-terminal 38 residues, 1–38, are a transit peptide targeting the mitochondrion; that stretch reads MALSLGWKAHRNHCGLLLQALRSSGLLLFPCGQCPWRG.

It belongs to the methyltransferase superfamily. ETFBKMT family. As to quaternary structure, interacts with HSPD1; this protein may possibly be a methylation substrate.

The protein localises to the cytoplasm. It localises to the mitochondrion matrix. It catalyses the reaction L-lysyl-[protein] + 3 S-adenosyl-L-methionine = N(6),N(6),N(6)-trimethyl-L-lysyl-[protein] + 3 S-adenosyl-L-homocysteine + 3 H(+). Functionally, protein-lysine methyltransferase that selectively trimethylates the flavoprotein ETFB in mitochondria. Thereby, may negatively regulate the function of ETFB in electron transfer from Acyl-CoA dehydrogenases to the main respiratory chain. The protein is Electron transfer flavoprotein beta subunit lysine methyltransferase of Homo sapiens (Human).